We begin with the raw amino-acid sequence, 109 residues long: Large ribosomal subunit protein uL22 (109 aa).

It belongs to the universal ribosomal protein uL22 family. As to quaternary structure, part of the 50S ribosomal subunit.

Its function is as follows. This protein binds specifically to 23S rRNA; its binding is stimulated by other ribosomal proteins, e.g. L4, L17, and L20. It is important during the early stages of 50S assembly. It makes multiple contacts with different domains of the 23S rRNA in the assembled 50S subunit and ribosome. The globular domain of the protein is located near the polypeptide exit tunnel on the outside of the subunit, while an extended beta-hairpin is found that lines the wall of the exit tunnel in the center of the 70S ribosome. This is Large ribosomal subunit protein uL22 from Bordetella petrii (strain ATCC BAA-461 / DSM 12804 / CCUG 43448).